The following is a 201-amino-acid chain: Recombination protein RecR (201 aa).

The C4-type zinc finger occupies Cys-57–Cys-74. The 97-residue stretch at Ser-82–Ala-178 folds into the Toprim domain.

This sequence belongs to the RecR family.

Functionally, may play a role in DNA repair. It seems to be involved in an RecBC-independent recombinational process of DNA repair. It may act with RecF and RecO. This chain is Recombination protein RecR, found in Leuconostoc citreum (strain KM20).